The primary structure comprises 130 residues: uncharacterized protein (130 aa).

The tract at residues 76–102 is disordered; the sequence is RKCKNGPSPNKRGSASGCSRRGGGRGS.

This is an uncharacterized protein from Saccharomyces cerevisiae (strain ATCC 204508 / S288c) (Baker's yeast).